A 358-amino-acid chain; its full sequence is ATPase ASNA1 homolog (358 aa).

35 to 42 (KGGVGKTT) contributes to the ATP binding site. Aspartate 64 is an active-site residue. 2 residues coordinate ATP: glutamate 235 and asparagine 262.

This sequence belongs to the arsA ATPase family. In terms of assembly, homodimer.

It localises to the cytoplasm. The protein localises to the endoplasmic reticulum. ATPase required for the post-translational delivery of tail-anchored (TA) proteins to the endoplasmic reticulum. Recognizes and selectively binds the transmembrane domain of TA proteins in the cytosol. This complex then targets to the endoplasmic reticulum by membrane-bound receptors, where the tail-anchored protein is released for insertion. This process is regulated by ATP binding and hydrolysis. ATP binding drives the homodimer towards the closed dimer state, facilitating recognition of newly synthesized TA membrane proteins. ATP hydrolysis is required for insertion. Subsequently, the homodimer reverts towards the open dimer state, lowering its affinity for the membrane-bound receptor, and returning it to the cytosol to initiate a new round of targeting. This chain is ATPase ASNA1 homolog, found in Babesia bovis.